Reading from the N-terminus, the 139-residue chain is Phosphoribosyl-AMP cyclohydrolase (139 aa).

Asp92 lines the Mg(2+) pocket. Cys93 lines the Zn(2+) pocket. Mg(2+)-binding residues include Asp94 and Asp96. 2 residues coordinate Zn(2+): Cys111 and Cys118.

The protein belongs to the PRA-CH family. As to quaternary structure, homodimer. The cofactor is Mg(2+). Requires Zn(2+) as cofactor.

The protein resides in the cytoplasm. It carries out the reaction 1-(5-phospho-beta-D-ribosyl)-5'-AMP + H2O = 1-(5-phospho-beta-D-ribosyl)-5-[(5-phospho-beta-D-ribosylamino)methylideneamino]imidazole-4-carboxamide. Its pathway is amino-acid biosynthesis; L-histidine biosynthesis; L-histidine from 5-phospho-alpha-D-ribose 1-diphosphate: step 3/9. Its function is as follows. Catalyzes the hydrolysis of the adenine ring of phosphoribosyl-AMP. This Caulobacter vibrioides (strain ATCC 19089 / CIP 103742 / CB 15) (Caulobacter crescentus) protein is Phosphoribosyl-AMP cyclohydrolase.